Here is a 30-residue protein sequence, read N- to C-terminus: Thylakoid lumenal 13.3 kDa protein (30 aa).

The protein resides in the plastid. It localises to the chloroplast thylakoid lumen. In Spinacia oleracea (Spinach), this protein is Thylakoid lumenal 13.3 kDa protein.